Consider the following 336-residue polypeptide: L-Ala-D/L-amino acid epimerase (336 aa).

Substrate is bound by residues T130 and 152 to 154 (KIK). D178, E204, and D229 together coordinate Mg(2+). Residues K251 and 301–303 (DMD) each bind substrate.

This sequence belongs to the mandelate racemase/muconate lactonizing enzyme family. The cofactor is Mg(2+).

Catalyzes the epimerization of D-Ala-D-Ala to D-Ala-L-Ala. Has broad substrate specificity and catalyzes the epimerization of a variety of dipeptides containing an N-terminal Ala followed by Ser, Thr, Val, Met, His, Phe or Trp (in vitro). This chain is L-Ala-D/L-amino acid epimerase, found in Flavobacterium johnsoniae (strain ATCC 17061 / DSM 2064 / JCM 8514 / BCRC 14874 / CCUG 350202 / NBRC 14942 / NCIMB 11054 / UW101) (Cytophaga johnsonae).